We begin with the raw amino-acid sequence, 200 residues long: GTP-dependent dephospho-CoA kinase (200 aa).

GTP is bound by residues Asp56, Val57, Val58, Asp75, and Glu132.

This sequence belongs to the GTP-dependent DPCK family.

The enzyme catalyses 3'-dephospho-CoA + GTP = GDP + CoA + H(+). It functions in the pathway cofactor biosynthesis; coenzyme A biosynthesis. In terms of biological role, catalyzes the GTP-dependent phosphorylation of the 3'-hydroxyl group of dephosphocoenzyme A to form coenzyme A (CoA). The sequence is that of GTP-dependent dephospho-CoA kinase from Caldivirga maquilingensis (strain ATCC 700844 / DSM 13496 / JCM 10307 / IC-167).